A 258-amino-acid chain; its full sequence is LLLLLALKTLWAVGNRFEAQIIGGREAVPHSRPYMVSLQNTKSHMCGGVLVHQKWVLTAAHCLSEPLQQLKLVFGLHSLHDPQDPGLTFYIKQAIKHPGYNLKYENDLALLKLDGRVKPSKNVKPLALPRKPRDKPAEGSRCSTAGWGITHQRGQLAKSLQELDLRLLDTRMCNNSRFWNGVLTDSMLCLKAGAKGQAPCKGDSGGPLVCGKGKVDGILSFSSKNCTDIFKPTVATAVAPYSSWIRKVIGRWSPQPLT.

In terms of domain architecture, Peptidase S1 spans 21 to 250 (IIGGREAVPH…YSSWIRKVIG (230 aa)). An intrachain disulfide couples Cys-46 to Cys-62. Residues His-61 and Asp-107 each act as charge relay system in the active site. The disordered stretch occupies residues 122–141 (NVKPLALPRKPRDKPAEGSR). Cystine bridges form between Cys-142–Cys-210, Cys-173–Cys-189, and Cys-200–Cys-226. Asn-174 carries N-linked (GlcNAc...) asparagine glycosylation. Residue Ser-204 is the Charge relay system of the active site. The N-linked (GlcNAc...) asparagine glycan is linked to Asn-225.

It belongs to the peptidase S1 family. Granzyme subfamily.

It localises to the secreted. It is found in the cytoplasmic granule. Cleaves peptide substrates after methionine, leucine, and norleucine. Physiological substrates include EZR, alpha-tubulins and the apoptosis inhibitor BIRC5/Survivin. Promotes caspase activation and subsequent apoptosis of target cells. This chain is Granzyme M (Gzmm), found in Rattus norvegicus (Rat).